The primary structure comprises 141 residues: Large ribosomal subunit protein uL14m (141 aa).

The N-terminal 19 residues, 1–19, are a transit peptide targeting the mitochondrion; it reads MALSLSGLILPKLMQQRAF.

The protein belongs to the universal ribosomal protein uL14 family. Component of the mitochondrial ribosome large subunit (39S) which comprises a 16S rRNA and about 50 distinct proteins. Interacts with MALSU1.

The protein resides in the mitochondrion. Functionally, may form part of 2 intersubunit bridges in the assembled ribosome. Upon binding to MALSU1, intersubunit bridge formation is blocked, preventing ribosome formation and repressing translation. The sequence is that of Large ribosomal subunit protein uL14m (mrpl14) from Danio rerio (Zebrafish).